The chain runs to 455 residues: Phosphoglycerate kinase, glycosomal (455 aa).

The (2R)-3-phosphoglycerate site is built by Val23, Asp24, Phe25, Asn26, Arg39, Ser61, His62, Gly64, Arg65, Arg132, His168, and Arg169. Gly214 and Ala215 together coordinate ADP. Gly214 contacts CDP. Ala215 and Lys216 together coordinate AMP. ATP is bound at residue Ala215. Ala215 is a binding site for Mg(2+). Lys216 is a binding site for (2R)-3-phosphoglycerate. Asp219 is a binding site for CDP. Residue Asp219 coordinates Mg(2+). ADP-binding residues include Lys220 and Gly238. AMP is bound at residue Lys220. Residue Lys220 coordinates ATP. CDP is bound at residue Gly238. AMP contacts are provided by Ala239 and Ala311. Positions 239 and 311 each coordinate ATP. The ADP site is built by Ala311 and Asn335. CDP is bound by residues Gly336 and Phe341. The ADP site is built by Phe341, Glu342, Asp374, and Thr375. Glu342 is an AMP binding site. ATP-binding residues include Glu342, Asp374, and Thr375. Mg(2+) is bound at residue Asp374. The interval 417 to 455 (DAKAPAAAAAAGGDCPCGSGCAAVPAAATATVSMVLASP) is topogenic signal.

It belongs to the phosphoglycerate kinase family. Monomer. Requires Mg(2+) as cofactor.

The protein localises to the glycosome. The catalysed reaction is (2R)-3-phosphoglycerate + ATP = (2R)-3-phospho-glyceroyl phosphate + ADP. The protein operates within carbohydrate degradation; glycolysis; pyruvate from D-glyceraldehyde 3-phosphate: step 2/5. This chain is Phosphoglycerate kinase, glycosomal (PGKC), found in Crithidia fasciculata.